The sequence spans 474 residues: Aspartyl/glutamyl-tRNA(Asn/Gln) amidotransferase subunit B (474 aa).

This sequence belongs to the GatB/GatE family. GatB subfamily. In terms of assembly, heterotrimer of A, B and C subunits.

The enzyme catalyses L-glutamyl-tRNA(Gln) + L-glutamine + ATP + H2O = L-glutaminyl-tRNA(Gln) + L-glutamate + ADP + phosphate + H(+). It carries out the reaction L-aspartyl-tRNA(Asn) + L-glutamine + ATP + H2O = L-asparaginyl-tRNA(Asn) + L-glutamate + ADP + phosphate + 2 H(+). Its function is as follows. Allows the formation of correctly charged Asn-tRNA(Asn) or Gln-tRNA(Gln) through the transamidation of misacylated Asp-tRNA(Asn) or Glu-tRNA(Gln) in organisms which lack either or both of asparaginyl-tRNA or glutaminyl-tRNA synthetases. The reaction takes place in the presence of glutamine and ATP through an activated phospho-Asp-tRNA(Asn) or phospho-Glu-tRNA(Gln). This Lactiplantibacillus plantarum (strain ATCC BAA-793 / NCIMB 8826 / WCFS1) (Lactobacillus plantarum) protein is Aspartyl/glutamyl-tRNA(Asn/Gln) amidotransferase subunit B.